Reading from the N-terminus, the 23-residue chain is Aurein-4.3 (23 aa).

The protein belongs to the frog skin active peptide (FSAP) family. Aurein subfamily. In terms of tissue distribution, expressed by the skin dorsal glands.

Its subcellular location is the secreted. Its function is as follows. Has no antimicrobial or anticancer activity. This is Aurein-4.3 from Ranoidea aurea (Green and golden bell frog).